The following is a 124-amino-acid chain: Small ribosomal subunit protein eS25 (124 aa).

Over residues 1 to 22 (MPPKDSKQKKDAGKSKKDKDPV) the composition is skewed to basic and acidic residues. The disordered stretch occupies residues 1-37 (MPPKDSKQKKDAGKSKKDKDPVNKSGGKAKKKKWSKG). Over residues 27–37 (GKAKKKKWSKG) the composition is skewed to basic residues.

The protein belongs to the eukaryotic ribosomal protein eS25 family. As to quaternary structure, component of the small ribosomal subunit.

It is found in the cytoplasm. Functionally, component of the small ribosomal subunit. The ribosome is a large ribonucleoprotein complex responsible for the synthesis of proteins in the cell. The protein is Small ribosomal subunit protein eS25 (rps25) of Danio rerio (Zebrafish).